The chain runs to 367 residues: Glutamate 5-kinase (367 aa).

Position 9 (K9) interacts with ATP. Residues S49, D136, and N148 each contribute to the substrate site. Residues 168-169 (TD) and 210-216 (TGGMKSK) each bind ATP. The region spanning 276–350 (SGQIEVDAGA…GMQSQDIQVR (75 aa)) is the PUA domain.

The protein belongs to the glutamate 5-kinase family.

The protein localises to the cytoplasm. The catalysed reaction is L-glutamate + ATP = L-glutamyl 5-phosphate + ADP. Its pathway is amino-acid biosynthesis; L-proline biosynthesis; L-glutamate 5-semialdehyde from L-glutamate: step 1/2. In terms of biological role, catalyzes the transfer of a phosphate group to glutamate to form L-glutamate 5-phosphate. The protein is Glutamate 5-kinase of Bacillus cereus (strain ATCC 14579 / DSM 31 / CCUG 7414 / JCM 2152 / NBRC 15305 / NCIMB 9373 / NCTC 2599 / NRRL B-3711).